Consider the following 199-residue polypeptide: Inosine triphosphate pyrophosphatase (199 aa).

12-17 (TGNAKK) contacts ITP. Residue glutamate 42 coordinates Mg(2+). ITP contacts are provided by residues lysine 54, 70–71 (DT), lysine 87, 146–149 (FGWD), lysine 169, and 174–175 (HR).

Belongs to the HAM1 NTPase family. In terms of assembly, homodimer. Mg(2+) is required as a cofactor. The cofactor is Mn(2+).

It is found in the cytoplasm. The catalysed reaction is ITP + H2O = IMP + diphosphate + H(+). It catalyses the reaction dITP + H2O = dIMP + diphosphate + H(+). It carries out the reaction XTP + H2O = XMP + diphosphate + H(+). In terms of biological role, pyrophosphatase that hydrolyzes non-canonical purine nucleotides such as inosine triphosphate (ITP), deoxyinosine triphosphate (dITP) or xanthosine 5'-triphosphate (XTP) to their respective monophosphate derivatives. The enzyme does not distinguish between the deoxy- and ribose forms. Probably excludes non-canonical purines from RNA and DNA precursor pools, thus preventing their incorporation into RNA and DNA and avoiding chromosomal lesions. In Monosiga brevicollis (Choanoflagellate), this protein is Inosine triphosphate pyrophosphatase.